The following is a 314-amino-acid chain: Bifunctional pinoresinol-lariciresinol reductase 3 (314 aa).

NADP(+) is bound by residues 11 to 17 (GGTGFIG), R36, and K45. K138 acts as the Proton acceptor in catalysis. R142 contributes to the NADP(+) binding site. H272 is a substrate binding site.

This sequence belongs to the NmrA-type oxidoreductase family. Isoflavone reductase subfamily. In terms of assembly, dimer.

The enzyme catalyses (-)-lariciresinol + NADP(+) = (-)-pinoresinol + NADPH + H(+). It carries out the reaction (+)-secoisolariciresinol + NADP(+) = (-)-lariciresinol + NADPH + H(+). Reductase involved in lignan biosynthesis. Catalyzes the enantioselective sequential conversion of (-)-pinoresinol into (-)-lariciresinol and of (-)-lariciresinol into (+)-secoisolariciresinol. Abstracts the 4R-hydride from the NADPH cofactor during catalysis. The protein is Bifunctional pinoresinol-lariciresinol reductase 3 of Thuja plicata (Western red-cedar).